The sequence spans 274 residues: NADPH-dependent 7-cyano-7-deazaguanine reductase (274 aa).

80–82 provides a ligand contact to substrate; that stretch reads VES. NADPH is bound at residue 82-83; that stretch reads SK. Catalysis depends on C181, which acts as the Thioimide intermediate. D188 functions as the Proton donor in the catalytic mechanism. Residue 220–221 coordinates substrate; sequence HE. 249–250 is a binding site for NADPH; it reads RG.

Belongs to the GTP cyclohydrolase I family. QueF type 2 subfamily. As to quaternary structure, homodimer.

Its subcellular location is the cytoplasm. It carries out the reaction 7-aminomethyl-7-carbaguanine + 2 NADP(+) = 7-cyano-7-deazaguanine + 2 NADPH + 3 H(+). Its pathway is tRNA modification; tRNA-queuosine biosynthesis. Catalyzes the NADPH-dependent reduction of 7-cyano-7-deazaguanine (preQ0) to 7-aminomethyl-7-deazaguanine (preQ1). The polypeptide is NADPH-dependent 7-cyano-7-deazaguanine reductase (Burkholderia vietnamiensis (strain G4 / LMG 22486) (Burkholderia cepacia (strain R1808))).